The following is a 270-amino-acid chain: Esterase (270 aa).

Active-site charge relay system residues include serine 127, aspartate 216, and histidine 244.

The protein belongs to the LovG family.

It participates in mycotoxin biosynthesis. Its function is as follows. Esterase; part of the gene cluster that mediates the biosynthesis of the selective antifungal agent ascochitine, an o-quinone methide that plays a possible protective role against other microbial competitors in nature and is considered to be important for pathogenicity of legume-associated Didymella species. The pathway probably begins with the synthesis of a keto-aldehyde intermediate by the ascochitine non-reducing polyketide synthase pksAC from successive condensations of 4 malonyl-CoA units, presumably with a simple acetyl-CoA starter unit. Release of the keto-aldehyde intermediate is consistent with the presence of the C-terminal reductive release domain. The HR-PKS (orf7) probably makes a diketide starter unit which is passed to the non-reducing polyketide synthase pksAC for further extension, producing ascochital and ascochitine. The aldehyde dehydrogenase (orf1), the 2-oxoglutarate-dependent dioxygenase (orf3) and the dehydrogenase (orf9) are probably involved in subsequent oxidations of methyl groups to the carboxylic acid of the heterocyclic ring. The ascochitine gene cluster also includes a gene encoding a short peptide with a cupin domain (orf2) that is often found in secondary metabolite gene clusters and which function has still to be determined. This is Esterase from Didymella fabae (Leaf and pod spot disease fungus).